The primary structure comprises 817 residues: U3 small nucleolar RNA-associated protein 13 (817 aa).

WD repeat units lie at residues E59–K100, S102–S139, G142–Q187, S191–L233, P238–R280, G386–D425, G432–D476, A489–T528, N531–E572, G573–D614, H616–E654, and E664–S705.

As to quaternary structure, interacts with snoRNA U3. Interacts with MPP10. Component of the ribosomal small subunit (SSU) processome composed of at least 40 protein subunits and snoRNA U3.

It is found in the nucleus. The protein localises to the nucleolus. Its function is as follows. Involved in nucleolar processing of pre-18S ribosomal RNA. The chain is U3 small nucleolar RNA-associated protein 13 (UTP13) from Saccharomyces cerevisiae (strain ATCC 204508 / S288c) (Baker's yeast).